Consider the following 297-residue polypeptide: ClpXP adapter protein SpxH (297 aa).

It belongs to the SpxH family. In terms of assembly, interacts with Spx.

Its subcellular location is the cytoplasm. Its function is as follows. Adapter protein required for efficient degradation of Spx by ClpXP under non-stress conditions. Interaction with Spx stabilizes Spx and exposes the C-terminus of Spx for recognition and proteolysis by ClpXP. This is ClpXP adapter protein SpxH from Bacillus thuringiensis subsp. konkukian (strain 97-27).